The chain runs to 494 residues: Cytochrome P450 2A11 (494 aa).

An N6-acetyllysine modification is found at Lys-379. Residue Cys-439 coordinates heme.

It belongs to the cytochrome P450 family. The cofactor is heme. In terms of tissue distribution, expressed in liver and lung as well as in nasal tissues.

Its subcellular location is the endoplasmic reticulum membrane. It is found in the microsome membrane. It carries out the reaction an organic molecule + reduced [NADPH--hemoprotein reductase] + O2 = an alcohol + oxidized [NADPH--hemoprotein reductase] + H2O + H(+). Catalyzes the oxygenation of a variety of substrates, including ethanol and procarcinogens such as N-nitrosodiethylamine and phenacetin. Has no or little activity as a coumarin 7-hydroxylase and in the formation of androstenedione from testosterone. In Oryctolagus cuniculus (Rabbit), this protein is Cytochrome P450 2A11 (CYP2A11).